The following is a 421-amino-acid chain: L-Ala-D/L-amino acid epimerase (421 aa).

Substrate-binding positions include Thr-193 and 218–220 (KLK). Positions 247, 275, and 304 each coordinate Mg(2+). Substrate is bound by residues Lys-328 and 380–382 (DLD).

The protein belongs to the mandelate racemase/muconate lactonizing enzyme family. It depends on Mg(2+) as a cofactor.

In terms of biological role, catalyzes the epimerization of various hydrophobic and polar dipeptides. Has epimerase activity with L-Ala-L-Ala, L-Ala-L-Ser, L-Ala-L-Thr and L-Ala-L-Trp (in vitro). The polypeptide is L-Ala-D/L-amino acid epimerase (Populus trichocarpa (Western balsam poplar)).